Reading from the N-terminus, the 214-residue chain is Pyrophosphatase PpaX (214 aa).

Asp9 functions as the Nucleophile in the catalytic mechanism.

This sequence belongs to the HAD-like hydrolase superfamily. PpaX family. It depends on Mg(2+) as a cofactor.

The catalysed reaction is diphosphate + H2O = 2 phosphate + H(+). In terms of biological role, hydrolyzes pyrophosphate formed during P-Ser-HPr dephosphorylation by HPrK/P. Might play a role in controlling the intracellular pyrophosphate pool. This Oceanobacillus iheyensis (strain DSM 14371 / CIP 107618 / JCM 11309 / KCTC 3954 / HTE831) protein is Pyrophosphatase PpaX.